Reading from the N-terminus, the 87-residue chain is Cell division protein ZapA (87 aa).

A coiled-coil region spans residues 64 to 87 (VHDYIKLKEEYDRLLQKLHKEKDE).

It belongs to the ZapA family. Type 2 subfamily. As to quaternary structure, homodimer. Interacts with FtsZ.

It localises to the cytoplasm. Its function is as follows. Activator of cell division through the inhibition of FtsZ GTPase activity, therefore promoting FtsZ assembly into bundles of protofilaments necessary for the formation of the division Z ring. It is recruited early at mid-cell but it is not essential for cell division. In Geobacillus sp. (strain WCH70), this protein is Cell division protein ZapA.